The sequence spans 242 residues: Biosynthetic peptidoglycan transglycosylase (242 aa).

A helical membrane pass occupies residues 19 to 39 (LMVVLAVFWAGGIALFSVAPV).

It belongs to the glycosyltransferase 51 family.

Its subcellular location is the cell inner membrane. It carries out the reaction [GlcNAc-(1-&gt;4)-Mur2Ac(oyl-L-Ala-gamma-D-Glu-L-Lys-D-Ala-D-Ala)](n)-di-trans,octa-cis-undecaprenyl diphosphate + beta-D-GlcNAc-(1-&gt;4)-Mur2Ac(oyl-L-Ala-gamma-D-Glu-L-Lys-D-Ala-D-Ala)-di-trans,octa-cis-undecaprenyl diphosphate = [GlcNAc-(1-&gt;4)-Mur2Ac(oyl-L-Ala-gamma-D-Glu-L-Lys-D-Ala-D-Ala)](n+1)-di-trans,octa-cis-undecaprenyl diphosphate + di-trans,octa-cis-undecaprenyl diphosphate + H(+). It functions in the pathway cell wall biogenesis; peptidoglycan biosynthesis. Its function is as follows. Peptidoglycan polymerase that catalyzes glycan chain elongation from lipid-linked precursors. In Shigella boydii serotype 4 (strain Sb227), this protein is Biosynthetic peptidoglycan transglycosylase.